The primary structure comprises 225 residues: Cytidylate kinase (225 aa).

11-19 contributes to the ATP binding site; it reads GPAAAGKST.

It belongs to the cytidylate kinase family. Type 1 subfamily.

The protein localises to the cytoplasm. It carries out the reaction CMP + ATP = CDP + ADP. The enzyme catalyses dCMP + ATP = dCDP + ADP. In Bacillus cereus (strain ATCC 10987 / NRS 248), this protein is Cytidylate kinase.